A 343-amino-acid chain; its full sequence is 4-hydroxy-2-oxovalerate aldolase 1 (343 aa).

The Pyruvate carboxyltransferase domain occupies 8–260 (ITVHDMSLRD…ETGVDVFAIS (253 aa)). 16 to 17 (RD) provides a ligand contact to substrate. Asp17 serves as a coordination point for Mn(2+). Catalysis depends on His20, which acts as the Proton acceptor. Substrate-binding residues include Ser170 and His199. Residues His199 and His201 each contribute to the Mn(2+) site. Residue Tyr290 coordinates substrate.

The protein belongs to the 4-hydroxy-2-oxovalerate aldolase family.

It catalyses the reaction (S)-4-hydroxy-2-oxopentanoate = acetaldehyde + pyruvate. This chain is 4-hydroxy-2-oxovalerate aldolase 1 (bphI), found in Burkholderia cenocepacia (strain ATCC BAA-245 / DSM 16553 / LMG 16656 / NCTC 13227 / J2315 / CF5610) (Burkholderia cepacia (strain J2315)).